We begin with the raw amino-acid sequence, 585 residues long: SLAIN motif-containing protein-like (585 aa).

5 disordered regions span residues 1-34 (MVVP…PNLT), 55-125 (NQTL…RVEE), 324-365 (QDYA…EDEC), 402-476 (PRLS…SDGQ), and 492-585 (GSMS…DGCY). Residues 68-83 (GGTNNSNLKAGSNINN) are compositionally biased toward polar residues. Positions 327–345 (ASTSASRRSSSASLQSLRR) are enriched in low complexity. Acidic residues predominate over residues 351–365 (QEFDSYSQEDEEDEC). Polar residues-rich tracts occupy residues 425–434 (PNLTPRTSLR), 441–476 (NSRS…SDGQ), and 549–563 (ASPS…TPRS). Residues 575 to 585 (LTDESWKDGCY) show a composition bias toward basic and acidic residues.

Belongs to the SLAIN motif-containing family.

The chain is SLAIN motif-containing protein-like from Danio rerio (Zebrafish).